The following is a 74-amino-acid chain: Dermaseptin-B3 (74 aa).

The first 22 residues, 1-22, serve as a signal peptide directing secretion; sequence MAFLKKSVFLVLFLGLVSLSIC. Residues 23-43 constitute a propeptide that is removed on maturation; it reads EEEKREEENEEKQEDDEQSEE.

Expressed by the skin glands.

The protein localises to the secreted. Functionally, possesses a potent antimicrobial activity against Gram-positive and Gram-negative bacteria. Probably acts by disturbing membrane functions with its amphipathic structure. This Phyllomedusa bicolor (Two-colored leaf frog) protein is Dermaseptin-B3.